A 727-amino-acid polypeptide reads, in one-letter code: C-terminal-binding protein 1 (727 aa).

The THAP-type zinc-finger motif lies at 5-60 (CGFPNCKFRSRYRGLEDNRHFYRIPKRPLILRQRWLTAIGRTEETVVSQLRICSAH). A disordered region spans residues 64–158 (GEKKEGDIPV…HPPVLPDPQQ (95 aa)). Residues 77 to 94 (TVDKQIKIELPPKESKNS) are compositionally biased toward basic and acidic residues. Residues Tyr-251, 331–336 (LGCGRV), Asp-355, 388–394 (CNLGDET), 415–417 (TSH), Asp-441, and 467–470 (HSAW) contribute to the NAD(+) site. The segment covering 587–613 (ANAQRGSPANRSSRSSPSPHTNKSSVS) has biased composition (low complexity). Disordered stretches follow at residues 587 to 629 (ANAQ…SPAA) and 652 to 681 (APNGDSGASTADSGIEGGDKEKVQSDGDEN).

It belongs to the D-isomer specific 2-hydroxyacid dehydrogenase family. Homodimer.

Its function is as follows. Binds DNA and represses gene expression. Plays a role in regulation of life span, possibly by regulating transcription of genes important for lipid metabolism. This chain is C-terminal-binding protein 1, found in Caenorhabditis elegans.